A 124-amino-acid chain; its full sequence is Glycine cleavage system H protein (124 aa).

Positions 22–104 (VATVGITEFA…YGAGWLFRVE (83 aa)) constitute a Lipoyl-binding domain. Residue Lys63 is modified to N6-lipoyllysine.

Belongs to the GcvH family. In terms of assembly, the glycine cleavage system is composed of four proteins: P, T, L and H. Requires (R)-lipoate as cofactor.

Functionally, the glycine cleavage system catalyzes the degradation of glycine. The H protein shuttles the methylamine group of glycine from the P protein to the T protein. This chain is Glycine cleavage system H protein, found in Beutenbergia cavernae (strain ATCC BAA-8 / DSM 12333 / CCUG 43141 / JCM 11478 / NBRC 16432 / NCIMB 13614 / HKI 0122).